Reading from the N-terminus, the 198-residue chain is Probable GTP-binding protein EngB (198 aa).

In terms of domain architecture, EngB-type G spans 22-197 (TLPEYAFIGR…LDYIEGINNS (176 aa)). Residues 30–37 (GRSNVGKS), 57–61 (GKTQL), 75–78 (DLPG), 142–145 (TKAD), and 175–178 (ITSA) each bind GTP. S37 and T59 together coordinate Mg(2+).

It belongs to the TRAFAC class TrmE-Era-EngA-EngB-Septin-like GTPase superfamily. EngB GTPase family. Mg(2+) serves as cofactor.

Necessary for normal cell division and for the maintenance of normal septation. In Christiangramia forsetii (strain DSM 17595 / CGMCC 1.15422 / KT0803) (Gramella forsetii), this protein is Probable GTP-binding protein EngB.